We begin with the raw amino-acid sequence, 303 residues long: Probable cell division protein WhiA (303 aa).

The segment at residues 272 to 303 (SIQQLADSLSRPLTKSGVNHRLRKINKIADEL) is a DNA-binding region (H-T-H motif).

It belongs to the WhiA family.

Its function is as follows. Involved in cell division and chromosome segregation. In Streptococcus sanguinis (strain SK36), this protein is Probable cell division protein WhiA.